The primary structure comprises 205 residues: MDLQYFILAFSSIFSILNPFGAVPVFITLTESYPKKERDLVAKKTVIYALAILLAFALFGEWILKFFGISLDAFKIAGGILLLLISLDMVRGQQEAKIHRKEIEAAYEIDEIALMPLATPLLAGPGSITACMVAMAEASDIGDKFLVILAILLSLGITYLTLLSAESVLDRIGRLGIRILTRMMGLILTAIAVQMIVNGIRGALL.

A run of 6 helical transmembrane segments spans residues 7 to 27, 49 to 69, 70 to 90, 112 to 132, 145 to 165, and 185 to 205; these read ILAF…PVFI, ALAI…FFGI, SLDA…LDMV, IALM…TACM, FLVI…LLSA, and GLIL…GALL.

It belongs to the UPF0056 (MarC) family.

The protein resides in the cell membrane. This Methanocaldococcus jannaschii (strain ATCC 43067 / DSM 2661 / JAL-1 / JCM 10045 / NBRC 100440) (Methanococcus jannaschii) protein is UPF0056 membrane protein MJ1677.